A 229-amino-acid chain; its full sequence is UPF0488 protein C8orf33 (229 aa).

The segment covering 1–16 (MAALGHLAGEAAAAPG) has biased composition (low complexity). Residues 1–96 (MAALGHLAGE…GEKASEKLAP (96 aa)) form a disordered region. Alanine 2 is modified (N-acetylalanine). Arginine 27 carries the post-translational modification Omega-N-methylarginine. Basic residues predominate over residues 69-79 (KKQKNKKKTRN). The residue at position 82 (serine 82) is a Phosphoserine.

Belongs to the UPF0488 family.

The sequence is that of UPF0488 protein C8orf33 (C8orf33) from Homo sapiens (Human).